A 200-amino-acid polypeptide reads, in one-letter code: Small ribosomal subunit protein uS4 (200 aa).

In terms of domain architecture, S4 RNA-binding spans 92-155 (SRLDAVVYSL…QKLNIIVESV (64 aa)).

This sequence belongs to the universal ribosomal protein uS4 family. Part of the 30S ribosomal subunit. Contacts protein S5. The interaction surface between S4 and S5 is involved in control of translational fidelity.

Functionally, one of the primary rRNA binding proteins, it binds directly to 16S rRNA where it nucleates assembly of the body of the 30S subunit. In terms of biological role, with S5 and S12 plays an important role in translational accuracy. In Staphylococcus aureus (strain JH9), this protein is Small ribosomal subunit protein uS4.